We begin with the raw amino-acid sequence, 1455 residues long: MFSMCKQTHSATAVEFSIACRFFNNLDENLVVAGANVLKVYRIAPNVEASQRQKLNPSEMRLAPKMRLECLATYTLYGNVMSLQCVSLAGAMRDALLISFKDAKLSVLQHDPDTFALKTLSLHYFEEDDIRGGWTGRYFVPTVRVDPDSRCAVMLVYGKRLVVLPFRKDNSLDEIELADVKPIKKAPTAMVSRTPIMASYLIALRDLDEKIDNVLDIQFLHGYYEPTLLILYEPVRTCPGRIKVRSDTCVLVAISLNIQQRVHPIIWTVNSLPFDCLQVYPIQKPIGGCLVMTVNAVIYLNQSVPPYGVSLNSSADNSTAFPLKPQDGVRISLDCANFAFIDVDKLVISLRTGDLYVLTLCVDSMRTVRNFHFHKAAASVLTSCICVLHSEYIFLGSRLGNSLLLHFTEEDQSTVITLDEVEQQSEQQQRNLQDEDQNLEEIFDVDQLEMAPTQAKSRRIEDEELEVYGSGAKASVLQLRKFIFEVCDSLMNVAPINYMCAGERVEFEEDGVTLRPHAESLQDLKIELVAATGHSKNGALSVFVNCINPQIITSFELDGCLDVWTVFDDATKKSSRNDQHDFMLLSQRNSTLVLQTGQEINEIENTGFTVNQPTIFVGNLGQQRFIVQVTTRHVRLLQGTRLIQNVPIDVGSPVVQVSIADPYVCLRVLNGQVITLALRETRGTPRLAINKHTISSSPAVVAISAYKDLSGLFTVKGDDINLTGSSNSAFGHSFGGYMKAEPNMKVEDEEDLLYGDAGSAFKMNSMADLAKQSKQKNSDWWRRLLVQAKPSYWLVVARQSGTLEIYSMPDMKLVYLVNDVGNGSMVLTDAMEFVPISLTTQENSKAGIVQACMPQHANSPLPLELSVIGLGLNGERPLLLVRTRVELLIYQVFRYPKGHLKIRFRKMDQLNLLDQQPTHIDLDENDEQEEIESYQMQPKYVQKLRPFANVGGLSGVMVCGVNPCFVFLTFRGELRIHRLLGNGDVRSFAAFNNVNIPNGFLYFDTTYELKISVLPSYLSYDSVWPVRKVPLRCTPRQLVYHRENRVYCLITQTEEPMTKYYRFNGEDKELSEESRGERFIYPIGSQFEMVLISPETWEIVPDASITFEPWEHVTAFKIVKLSYEGTRSGLKEYLCIGTNFNYSEDITSRGNIHIYDIIEVVPEPGKPMTKFKIKEIFKKEQKGPVSAISDVLGFLVTGLGQKIYIWQLRDGDLIGVAFIDTNIYVHQIITVKSLIFIADVYKSISLLRFQEEYRTLSLASRDFNPLEVYGIEFMVDNSNLGFLVTDAERNIIVYMYQPEARESLGGQKLLRKADYHLGQVVNTMFRVQCHQKGLHQRQPFLYENKHFVVYGTLDGALGYCLPLPEKVYRRFLMLQNVLLSYQEHLCGLNPKEYRTLKSSKKQGINPSRCIIDGDLIWSYRLMANSERNEVAKKIGTRTEEILGDLLEIERLASVF.

This sequence belongs to the CPSF1 family. Component of the cleavage and polyadenylation specificity factor (CPSF) complex, composed of at least Clp, Cpsf73, Cpsf100 and Cpsf160.

It is found in the nucleus. Functionally, component of the cleavage and polyadenylation specificity factor (CPSF) complex that plays a key role in pre-mRNA 3'-end formation, recognizing the AAUAAA signal sequence and interacting with poly(A) polymerase and other factors to bring about cleavage and poly(A) addition. This subunit is involved in the RNA recognition step of the polyadenylation reaction. This Drosophila melanogaster (Fruit fly) protein is Cleavage and polyadenylation specificity factor subunit 1 (Cpsf160).